Reading from the N-terminus, the 502-residue chain is UDP-N-acetylmuramate--L-alanine ligase (502 aa).

An ATP-binding site is contributed by 119 to 125 (GSHGKST).

It belongs to the MurCDEF family.

The protein localises to the cytoplasm. The enzyme catalyses UDP-N-acetyl-alpha-D-muramate + L-alanine + ATP = UDP-N-acetyl-alpha-D-muramoyl-L-alanine + ADP + phosphate + H(+). It participates in cell wall biogenesis; peptidoglycan biosynthesis. In terms of biological role, cell wall formation. The sequence is that of UDP-N-acetylmuramate--L-alanine ligase from Frankia casuarinae (strain DSM 45818 / CECT 9043 / HFP020203 / CcI3).